Consider the following 184-residue polypeptide: Photosystem I assembly protein Ycf4 (184 aa).

2 helical membrane passes run 22 to 42 (FCWA…GISS) and 57 to 77 (IIFF…LFIS).

The protein belongs to the Ycf4 family.

The protein resides in the plastid. It is found in the chloroplast thylakoid membrane. Functionally, seems to be required for the assembly of the photosystem I complex. The sequence is that of Photosystem I assembly protein Ycf4 from Ipomoea purpurea (Common morning glory).